Reading from the N-terminus, the 1651-residue chain is Putative serine/threonine-protein kinase/receptor R818 (1651 aa).

The N-terminal stretch at 1–19 (MKSIGIFVVALWLTHFCDG) is a signal peptide. 14 N-linked (GlcNAc...) asparagine; by host glycosylation sites follow: asparagine 111, asparagine 135, asparagine 190, asparagine 236, asparagine 275, asparagine 276, asparagine 287, asparagine 452, asparagine 455, asparagine 477, asparagine 495, asparagine 540, asparagine 596, and asparagine 722. Residues 749–769 (IILAIVIPVSFVICCIIIVLV) traverse the membrane as a helical segment. The Protein kinase 1 domain maps to 793-1057 (LDFMESLGSG…EIMTKLSTLI (265 aa)). ATP-binding positions include 799 to 807 (LGSGGSGEV) and lysine 820. The active-site Proton acceptor is aspartate 915. Residues 1089-1115 (IHNNDETKNSFGSTTYGSNTISSSSNT) are disordered. A compositionally biased stretch (low complexity) spans 1100 to 1115 (GSTTYGSNTISSSSNT). In terms of domain architecture, Guanylate cyclase spans 1135–1278 (IIVFTDIISA…VTVNIAAKIT (144 aa)). Positions 1394–1645 (IQIGKQIGVG…DVIMGLNDML (252 aa)) constitute a Protein kinase 2 domain. ATP contacts are provided by residues 1400 to 1408 (IGVGSYGIV) and lysine 1421. The active-site Proton acceptor is aspartate 1515.

It localises to the membrane. The catalysed reaction is L-seryl-[protein] + ATP = O-phospho-L-seryl-[protein] + ADP + H(+). It carries out the reaction L-threonyl-[protein] + ATP = O-phospho-L-threonyl-[protein] + ADP + H(+). This chain is Putative serine/threonine-protein kinase/receptor R818, found in Acanthamoeba polyphaga mimivirus (APMV).